The following is a 157-amino-acid chain: Protein-export protein SecB (157 aa).

This sequence belongs to the SecB family. As to quaternary structure, homotetramer, a dimer of dimers. One homotetramer interacts with 1 SecA dimer.

The protein resides in the cytoplasm. Its function is as follows. One of the proteins required for the normal export of preproteins out of the cell cytoplasm. It is a molecular chaperone that binds to a subset of precursor proteins, maintaining them in a translocation-competent state. It also specifically binds to its receptor SecA. The protein is Protein-export protein SecB of Photobacterium profundum (strain SS9).